A 543-amino-acid polypeptide reads, in one-letter code: CTP synthase (543 aa).

The interval 1–265 is amidoligase domain; it reads MARYIFITGG…DDEVLAAFGI (265 aa). S13 contributes to the CTP binding site. S13 provides a ligand contact to UTP. 14–19 contacts ATP; that stretch reads SLGKGL. Y54 provides a ligand contact to L-glutamine. D71 lines the ATP pocket. D71 and E139 together coordinate Mg(2+). CTP-binding positions include 146-148, 186-191, and K222; these read DIE and KTKPTQ. UTP-binding positions include 186–191 and K222; that span reads KTKPTQ. 238-240 is an ATP binding site; sequence RDA. The region spanning 291 to 542 is the Glutamine amidotransferase type-1 domain; it reads TIAIVGKYTG…IQAAVVQSRL (252 aa). Residue G353 coordinates L-glutamine. C380 (nucleophile; for glutamine hydrolysis) is an active-site residue. L-glutamine contacts are provided by residues 381–384, E404, and R470; that span reads FGMQ. Residues H515 and E517 contribute to the active site.

The protein belongs to the CTP synthase family. As to quaternary structure, homotetramer.

The catalysed reaction is UTP + L-glutamine + ATP + H2O = CTP + L-glutamate + ADP + phosphate + 2 H(+). The enzyme catalyses L-glutamine + H2O = L-glutamate + NH4(+). It carries out the reaction UTP + NH4(+) + ATP = CTP + ADP + phosphate + 2 H(+). The protein operates within pyrimidine metabolism; CTP biosynthesis via de novo pathway; CTP from UDP: step 2/2. Allosterically activated by GTP, when glutamine is the substrate; GTP has no effect on the reaction when ammonia is the substrate. The allosteric effector GTP functions by stabilizing the protein conformation that binds the tetrahedral intermediate(s) formed during glutamine hydrolysis. Inhibited by the product CTP, via allosteric rather than competitive inhibition. Its function is as follows. Catalyzes the ATP-dependent amination of UTP to CTP with either L-glutamine or ammonia as the source of nitrogen. Regulates intracellular CTP levels through interactions with the four ribonucleotide triphosphates. In Nitrobacter winogradskyi (strain ATCC 25391 / DSM 10237 / CIP 104748 / NCIMB 11846 / Nb-255), this protein is CTP synthase.